The sequence spans 101 residues: Interleukin-8 (101 aa).

The N-terminal stretch at 1–22 (MTSKLAVALLAAFLLSAALCEG) is a signal peptide. The residue at position 27 (Arg27) is a Citrulline. Cystine bridges form between Cys34–Cys61 and Cys36–Cys77.

Belongs to the intercrine alpha (chemokine CxC) family. In terms of assembly, homodimer. Interacts with TNFAIP6 (via Link domain); this interaction interferes with chemokine binding to glycosaminoglycans. In terms of processing, citrullination at Arg-27 prevents proteolysis, and dampens tissue inflammation, it also enhances leukocytosis, possibly through impaired chemokine clearance from the blood circulation.

The protein localises to the secreted. Its function is as follows. Chemotactic factor that mediates inflammatory response by attracting neutrophils, basophils, and T-cells to clear pathogens and protect the host from infection. Also plays an important role in neutrophil activation. Released in response to an inflammatory stimulus, exerts its effect by binding to the G-protein-coupled receptors CXCR1 and CXCR2, primarily found in neutrophils, monocytes and endothelial cells. G-protein heterotrimer (alpha, beta, gamma subunits) constitutively binds to CXCR1/CXCR2 receptor and activation by IL8 leads to beta and gamma subunits release from Galpha (GNAI2 in neutrophils) and activation of several downstream signaling pathways including PI3K and MAPK pathways. The protein is Interleukin-8 (CXCL8) of Macaca mulatta (Rhesus macaque).